The sequence spans 353 residues: L-tryptophan dehydrogenase (353 aa).

NAD(+) is bound at residue Arg44. Lys80 functions as the Proton donor/acceptor in the catalytic mechanism. NAD(+) contacts are provided by residues Asp114, Thr146, 176-181 (GLGNVG), Lys204, and 255-257 (AAN).

Belongs to the Glu/Leu/Phe/Val dehydrogenases family. Homodimer.

It carries out the reaction L-tryptophan + NAD(+) + H2O = indole-3-pyruvate + NH4(+) + NADH + H(+). In terms of biological role, catalyzes the reversible oxidative deamination of L-tryptophan to indole-3-pyruvate in the presence of NAD(+). Cannot use other L-amino acids and D-Trp. Involved in the biosynthesis of scytonemin, a cyanobacterial radiation-absorbing pigment. This is L-tryptophan dehydrogenase from Nostoc punctiforme (strain ATCC 29133 / PCC 73102).